Here is a 351-residue protein sequence, read N- to C-terminus: Pleckstrin (351 aa).

The 98-residue stretch at 4–101 (KRIREGYLVK…WVRDTKKAIK (98 aa)) folds into the PH 1 domain. An N6-acetyllysine modification is found at lysine 64. Phosphoserine is present on residues serine 113 and serine 117. In terms of domain architecture, DEP spans 136–221 (IEKGIKELNL…NPDAFYYFPD (86 aa)). The PH 2 domain occupies 244-348 (VIIKQGCLLK…WIKAIQVASR (105 aa)).

In terms of biological role, major protein kinase C substrate of platelets. The polypeptide is Pleckstrin (PLEK) (Canis lupus familiaris (Dog)).